The following is a 146-amino-acid chain: Transcriptional regulator MraZ (146 aa).

2 consecutive SpoVT-AbrB domains span residues 5 to 51 (NHPT…PLQE) and 80 to 123 (GQMV…NHEA).

It belongs to the MraZ family. In terms of assembly, forms oligomers.

The protein resides in the cytoplasm. Its subcellular location is the nucleoid. The chain is Transcriptional regulator MraZ from Acidobacterium capsulatum (strain ATCC 51196 / DSM 11244 / BCRC 80197 / JCM 7670 / NBRC 15755 / NCIMB 13165 / 161).